The chain runs to 251 residues: Triosephosphate isomerase (251 aa).

9 to 11 (NWK) contacts substrate. His-95 acts as the Electrophile in catalysis. Glu-167 (proton acceptor) is an active-site residue. Residues Gly-173, Ser-212, and 233–234 (GG) contribute to the substrate site.

The protein belongs to the triosephosphate isomerase family. Homodimer.

The protein localises to the cytoplasm. It catalyses the reaction D-glyceraldehyde 3-phosphate = dihydroxyacetone phosphate. The protein operates within carbohydrate biosynthesis; gluconeogenesis. It functions in the pathway carbohydrate degradation; glycolysis; D-glyceraldehyde 3-phosphate from glycerone phosphate: step 1/1. Its function is as follows. Involved in the gluconeogenesis. Catalyzes stereospecifically the conversion of dihydroxyacetone phosphate (DHAP) to D-glyceraldehyde-3-phosphate (G3P). The polypeptide is Triosephosphate isomerase (Pseudomonas aeruginosa (strain LESB58)).